The chain runs to 148 residues: Deoxyuridine 5'-triphosphate nucleotidohydrolase (148 aa).

DUMP-binding residues include Ser69, Gly82, Asp85, Tyr88, Arg137, Phe142, and Gly143.

This sequence belongs to the dUTPase family. As to quaternary structure, homotrimer. Requires Mg(2+) as cofactor.

The catalysed reaction is dUTP + H2O = dUMP + diphosphate + H(+). It functions in the pathway pyrimidine metabolism; dUMP biosynthesis; dUMP from dCTP (dUTP route): step 2/2. In terms of biological role, involved in nucleotide metabolism via production of dUMP, the immediate precursor of thymidine nucleotides, and decreases the intracellular concentration of dUTP so that uracil cannot be incorporated into DNA. This Kluyveromyces lactis (strain ATCC 8585 / CBS 2359 / DSM 70799 / NBRC 1267 / NRRL Y-1140 / WM37) (Yeast) protein is Deoxyuridine 5'-triphosphate nucleotidohydrolase (DUT1).